Consider the following 111-residue polypeptide: Gene 81 protein (111 aa).

The protein is Gene 81 protein (81) of Mycobacterium (Mycobacteriophage L5).